The sequence spans 273 residues: Undecaprenyl-diphosphatase (273 aa).

Transmembrane regions (helical) follow at residues 6-26, 45-65, 90-110, 116-136, 190-210, 222-242, and 252-272; these read SLLIAAILGVVEGLTEFLPVS, AKTFEVVIQLGSILAVVVMFW, LTLIHILLGMIPAVVLGLVFH, LFNPINVMYTLVVGGLLLIAA, YAASEFSFLLAVPMMMGATVL, ADIPMFAVGFVTAFVVALIAI, and ISFIPFAIYRFVVAAAVYVVF.

The protein belongs to the UppP family.

It is found in the cell inner membrane. It catalyses the reaction di-trans,octa-cis-undecaprenyl diphosphate + H2O = di-trans,octa-cis-undecaprenyl phosphate + phosphate + H(+). Catalyzes the dephosphorylation of undecaprenyl diphosphate (UPP). Confers resistance to bacitracin. This Salmonella paratyphi C (strain RKS4594) protein is Undecaprenyl-diphosphatase.